The following is a 546-amino-acid chain: (-)-5-epieremophilene synthase STPS2 (546 aa).

Residues Asp-299, Asp-303, Asp-442, Thr-446, and Glu-450 each coordinate Mg(2+). The short motif at Asp-299 to Asp-303 is the DDXXD motif element.

This sequence belongs to the terpene synthase family. Tpsa subfamily. Monomer. It depends on Mg(2+) as a cofactor. Highly expressed in leaves. Expressed at levels in flowers.

The enzyme catalyses (2E,6E)-farnesyl diphosphate = (-)-5-epi-eremophilene + diphosphate. It participates in secondary metabolite biosynthesis; terpenoid biosynthesis. Functionally, sesquiterpene synthase that catalyzes the conversion of farnesyl diphosphate to (-)-5-epi-eremophilene. This Salvia miltiorrhiza (Chinese sage) protein is (-)-5-epieremophilene synthase STPS2.